Here is an 838-residue protein sequence, read N- to C-terminus: MFWRLGQGFGFQSSSAIEAILDKPEDEINLKELLEENGVLDECKSHNPKLLEYLCKPEVLSQLIDYILEVDETEIPSADGGYEEPEHTRLSYIASEILSSDVWSICEACVENKTLMVKLWSFLDSEGPLNPLQASYFAKVNEHFLDKKTEETVAFIQSIDNFVEKILRHAETSAIMDLLLKFISMDRCNTAIGIADWLYSQGLIQSLLRLLSPYVDPDVQFTVADVIKAIIAISANSNEPGVIGPNSLSRELVSRQTITTLTDYMTDSKAPHSATSLINGVSIVIELIRKNNSDYDVTPVLQMPLDTHPPTTRDPIYLGTMLRLFAEKIPVFQKILLKPSTESDLMPTSFGKIKPLGFERFRICELYAELLHCSNMSLLSDPNGEAMVMQRDHLRDYLFRHNSCARDLVMSDEDDDDSTFSDKNSKDFKETEDMNGAEDMHGRAPQITKDNLNLTTTDSPMSEAEPVSEEEYKDVMETAKALHHGDDDAASDTSYEPLPESVIEDAKKLPVIGDFLKIEFIQNNVIPTILDHFFDYPWNNFLHNVVYDVVQQVLNAPMDKDQNYALAVDMFKQGKITEKIVYGQELNDKKVAKPSGFRAGYMGHLTIIADEVVKFVEHYSSTFDQELLNLINDEKWQNFVNKTLVETRNRDNQLLGGLEPSMVGYLEDMDEGEMLDANNLPEMQFALEQELESNSSDDDVVEVHRELSHNSSSNDEDDGNDEDPLSREMSRRLSFESANDSDQDNRDHFAQYMSQQISDNNANQFSSSDEDDDDDDEVVEWVSRGNENKYPRSNFFINGSDREDFSDSEEEDGNDSSDDDRGFAEEEYSDGLVLNHGK.

Phosphoserine occurs at positions 411 and 418. The disordered stretch occupies residues 411-468 (SDEDDDDSTFSDKNSKDFKETEDMNGAEDMHGRAPQITKDNLNLTTTDSPMSEAEPVS). Position 419 is a phosphothreonine (Thr-419). Residues 423-442 (KNSKDFKETEDMNGAEDMHG) show a composition bias toward basic and acidic residues. Residues Ser-425, Ser-459, Ser-468, and Ser-491 each carry the phosphoserine modification. The span at 448–460 (TKDNLNLTTTDSP) shows a compositional bias: polar residues. A Phosphothreonine modification is found at Thr-493. Phosphoserine is present on Ser-494. Residues 690–700 (ELESNSSDDDV) are compositionally biased toward acidic residues. Disordered regions lie at residues 690–745 (ELES…DQDN) and 757–838 (ISDN…NHGK). Residues Ser-711 and Ser-713 each carry the phosphoserine modification. The span at 714–723 (NDEDDGNDED) shows a compositional bias: acidic residues. Residues 724 to 734 (PLSREMSRRLS) show a composition bias toward basic and acidic residues. Acidic residues-rich tracts occupy residues 768–779 (SDEDDDDDDEVV) and 806–818 (SDSEEEDGNDSSD).

This sequence belongs to the SAPS family. In terms of assembly, interacts with ppe1 and mis12.

The protein resides in the nucleus. Functionally, has a role in chromosome segregation. May provide a dynamic connection between kinetochore microtubules and kinetochore chromatin. In Schizosaccharomyces pombe (strain 972 / ATCC 24843) (Fission yeast), this protein is Extragenic suppressor of kinetochore protein 1 (ekc1).